Here is a 223-residue protein sequence, read N- to C-terminus: Kinetochore protein Spc25 (223 aa).

The stretch at 51–116 forms a coiled coil; that stretch reads RHQRKVGKLQ…QRKNEIMERI (66 aa).

Belongs to the SPC25 family. Component of the Ndc80 complex, which is composed of Ndc80, Nuf2 and Spc25.

Its subcellular location is the nucleus. It is found in the chromosome. It localises to the centromere. The protein resides in the kinetochore. Its function is as follows. Acts as a component of the essential kinetochore-associated Ndc80 complex, which is required for chromosome segregation and spindle checkpoint activity during meiosis and mitosis. Required for kinetochore integrity and the organization of stable microtubule binding sites in the outer plate of the kinetochore. Participates in SAC signaling that responds specifically to disruptions in spindle microtubule dynamics. The NDC80 complex synergistically enhances the affinity of the SKA1 complex for microtubules and may allow the NDC80 complex to track depolymerizing microtubules. This chain is Kinetochore protein Spc25, found in Drosophila yakuba (Fruit fly).